The sequence spans 238 residues: Ribosomal RNA small subunit methyltransferase G (238 aa).

S-adenosyl-L-methionine is bound by residues Gly-77, Phe-82, 128-129 (AE), and Arg-147. Residues 219-238 (RQTPKKYPRKAGLPNKEPIE) form a disordered region.

The protein belongs to the methyltransferase superfamily. RNA methyltransferase RsmG family.

The protein resides in the cytoplasm. Its function is as follows. Specifically methylates the N7 position of guanine in position 535 of 16S rRNA. The sequence is that of Ribosomal RNA small subunit methyltransferase G from Oceanobacillus iheyensis (strain DSM 14371 / CIP 107618 / JCM 11309 / KCTC 3954 / HTE831).